The primary structure comprises 193 residues: dCTP deaminase, dUMP-forming (193 aa).

Residues 101 to 106 (KSSLGR), Asp119, 127 to 129 (TLE), Gln148, Tyr162, and Gln174 contribute to the dCTP site. The active-site Proton donor/acceptor is Glu129. A disordered region spans residues 160-193 (TPYGSGSLGSKYQGQRGPTPSKGYLNFSSEQDSD). The segment covering 167 to 177 (LGSKYQGQRGP) has biased composition (polar residues).

It belongs to the dCTP deaminase family. As to quaternary structure, homotrimer.

The catalysed reaction is dCTP + 2 H2O = dUMP + NH4(+) + diphosphate. It participates in pyrimidine metabolism; dUMP biosynthesis; dUMP from dCTP: step 1/1. Its function is as follows. Bifunctional enzyme that catalyzes both the deamination of dCTP to dUTP and the hydrolysis of dUTP to dUMP without releasing the toxic dUTP intermediate. The chain is dCTP deaminase, dUMP-forming from Corynebacterium efficiens (strain DSM 44549 / YS-314 / AJ 12310 / JCM 11189 / NBRC 100395).